The chain runs to 262 residues: Cytochrome b mRNA maturase bI2 (262 aa).

The protein belongs to the LAGLIDADG endonuclease family.

It localises to the mitochondrion. Its function is as follows. This protein is responsible for splicing and maturation of cytochrome b mRNA. Specifically, it may be responsible for the splicing specificity of the second intron. This chain is Cytochrome b mRNA maturase bI2 (bI2), found in Debaryomyces hansenii (strain ATCC 36239 / CBS 767 / BCRC 21394 / JCM 1990 / NBRC 0083 / IGC 2968) (Yeast).